A 469-amino-acid polypeptide reads, in one-letter code: Relaxin-3 receptor 1 (469 aa).

Residues 1–81 are Extracellular-facing; it reads MQMADAATIA…ESADTEARVR (81 aa). Residues N36 and N40 are each glycosylated (N-linked (GlcNAc...) asparagine). A helical transmembrane segment spans residues 82-102; the sequence is ILISVVYWVVCALGLAGNLLV. Topologically, residues 103–119 are cytoplasmic; it reads LYLMKSMQGWRKSSINL. A helical membrane pass occupies residues 120 to 140; the sequence is FVTNLALTDFQFVLTLPFWAV. The Extracellular segment spans residues 141-156; sequence ENALDFKWPFGKAMCK. Residues C155 and C247 are joined by a disulfide bond. The helical transmembrane segment at 157-177 threads the bilayer; it reads IVSMVTSMNMYASVFFLTAMS. Residues 178 to 215 are Cytoplasmic-facing; it reads VTRYHSVASALKSHRTRGHGRGDCCGRSLGDSCCFSAK. The helical transmembrane segment at 216 to 236 threads the bilayer; the sequence is ALCVWIWALAALASLPSAIFS. The Extracellular portion of the chain corresponds to 237–270; that stretch reads TTVKVMGEELCLVRFPDKLLGRDRQFWLGLYHSQ. A helical transmembrane segment spans residues 271-291; that stretch reads KVLLGFVLPLGIIILCYLLLV. Residues 292-329 are Cytoplasmic-facing; it reads RFIADRRAAGTKGGAAVAGGRPTGASARRLSKVTKSVT. A helical transmembrane segment spans residues 330–350; it reads IVVLSFFLCWLPNQALTTWSI. At 351–356 the chain is on the extracellular side; sequence LIKFNA. The chain crosses the membrane as a helical span at residues 357-377; the sequence is VPFSQEYFLCQVYAFPVSVCL. The Cytoplasmic portion of the chain corresponds to 378–469; the sequence is AHSNSCLNPV…YDLLPSSSAY (92 aa).

Belongs to the G-protein coupled receptor 1 family. Expressed predominantly in brain regions. Highest expression in substantia nigra and pituitary, followed by hippocampus, spinal cord, amygdala, caudate nucleus and corpus callosum, quite low level in cerebellum. In peripheral tissues, relatively high levels in adrenal glands, low levels in pancreas, salivary gland, placenta, mammary gland and testis.

It localises to the cell membrane. Functionally, receptor for RNL3/relaxin-3. Binding of the ligand inhibit cAMP accumulation. The protein is Relaxin-3 receptor 1 (RXFP3) of Homo sapiens (Human).